We begin with the raw amino-acid sequence, 141 residues long: ATP synthase epsilon chain (141 aa).

The protein belongs to the ATPase epsilon chain family. F-type ATPases have 2 components, CF(1) - the catalytic core - and CF(0) - the membrane proton channel. CF(1) has five subunits: alpha(3), beta(3), gamma(1), delta(1), epsilon(1). CF(0) has three main subunits: a, b and c.

It localises to the cell inner membrane. Its function is as follows. Produces ATP from ADP in the presence of a proton gradient across the membrane. This Teredinibacter turnerae (strain ATCC 39867 / T7901) protein is ATP synthase epsilon chain.